Reading from the N-terminus, the 563-residue chain is Proline--tRNA ligase (563 aa).

Belongs to the class-II aminoacyl-tRNA synthetase family. ProS type 1 subfamily. As to quaternary structure, homodimer.

The protein resides in the cytoplasm. It carries out the reaction tRNA(Pro) + L-proline + ATP = L-prolyl-tRNA(Pro) + AMP + diphosphate. Catalyzes the attachment of proline to tRNA(Pro) in a two-step reaction: proline is first activated by ATP to form Pro-AMP and then transferred to the acceptor end of tRNA(Pro). As ProRS can inadvertently accommodate and process non-cognate amino acids such as alanine and cysteine, to avoid such errors it has two additional distinct editing activities against alanine. One activity is designated as 'pretransfer' editing and involves the tRNA(Pro)-independent hydrolysis of activated Ala-AMP. The other activity is designated 'posttransfer' editing and involves deacylation of mischarged Ala-tRNA(Pro). The misacylated Cys-tRNA(Pro) is not edited by ProRS. This Persephonella marina (strain DSM 14350 / EX-H1) protein is Proline--tRNA ligase.